The chain runs to 413 residues: Putative adhesin P1-like protein MPN_144 (413 aa).

Polar residues-rich tracts occupy residues 1–13, 25–54, and 355–376; these read MGQQ…SAGN, SGDS…NLTP, and SFGT…VFGT. Disordered stretches follow at residues 1–60 and 355–413; these read MGQQ…DWPN and SFGT…VSGH. A compositionally biased stretch (gly residues) spans 385-399; that stretch reads LSGGGAGGGSSGSGQ.

Belongs to the adhesin P1 family.

This is Putative adhesin P1-like protein MPN_144 from Mycoplasma pneumoniae (strain ATCC 29342 / M129 / Subtype 1) (Mycoplasmoides pneumoniae).